A 657-amino-acid polypeptide reads, in one-letter code: 1-deoxy-D-xylulose-5-phosphate synthase (657 aa).

Thiamine diphosphate is bound at residue histidine 73. The disordered stretch occupies residues 91–110; it reads RQEGGMSGYPDRGESEHDIV. Positions 101 to 110 are enriched in basic and acidic residues; the sequence is DRGESEHDIV. A thiamine diphosphate-binding site is contributed by 113 to 115; it reads SHA. Mg(2+) is bound at residue aspartate 145. Thiamine diphosphate-binding positions include 146–147, asparagine 175, tyrosine 293, and glutamate 375; that span reads GA. Asparagine 175 lines the Mg(2+) pocket.

The protein belongs to the transketolase family. DXPS subfamily. As to quaternary structure, homodimer. Mg(2+) is required as a cofactor. It depends on thiamine diphosphate as a cofactor.

It carries out the reaction D-glyceraldehyde 3-phosphate + pyruvate + H(+) = 1-deoxy-D-xylulose 5-phosphate + CO2. It functions in the pathway metabolic intermediate biosynthesis; 1-deoxy-D-xylulose 5-phosphate biosynthesis; 1-deoxy-D-xylulose 5-phosphate from D-glyceraldehyde 3-phosphate and pyruvate: step 1/1. In terms of biological role, catalyzes the acyloin condensation reaction between C atoms 2 and 3 of pyruvate and glyceraldehyde 3-phosphate to yield 1-deoxy-D-xylulose-5-phosphate (DXP). This Arthrobacter sp. (strain FB24) protein is 1-deoxy-D-xylulose-5-phosphate synthase.